A 361-amino-acid chain; its full sequence is ATP-dependent 6-phosphofructokinase 1 (361 aa).

ATP is bound by residues glycine 14, 79 to 80 (KG), and 116 to 119 (GDGS). A Mg(2+)-binding site is contributed by aspartate 117. Residues 140-142 (TID), arginine 177, 184-186 (MGR), glutamate 237, arginine 278, and 284-287 (HIQR) contribute to the substrate site. Residue aspartate 142 is the Proton acceptor of the active site.

This sequence belongs to the phosphofructokinase type A (PFKA) family. Mixed-substrate PFK group III subfamily. As to quaternary structure, homodimer or homotetramer. The cofactor is Mg(2+).

The protein resides in the cytoplasm. The enzyme catalyses beta-D-fructose 6-phosphate + ATP = beta-D-fructose 1,6-bisphosphate + ADP + H(+). It functions in the pathway carbohydrate degradation; glycolysis; D-glyceraldehyde 3-phosphate and glycerone phosphate from D-glucose: step 3/4. Catalyzes the phosphorylation of D-fructose 6-phosphate to fructose 1,6-bisphosphate by ATP, the first committing step of glycolysis. The protein is ATP-dependent 6-phosphofructokinase 1 of Synechocystis sp. (strain ATCC 27184 / PCC 6803 / Kazusa).